We begin with the raw amino-acid sequence, 873 residues long: Alanine--tRNA ligase (873 aa).

Residues histidine 557, histidine 561, cysteine 659, and histidine 663 each coordinate Zn(2+).

Belongs to the class-II aminoacyl-tRNA synthetase family. Requires Zn(2+) as cofactor.

Its subcellular location is the cytoplasm. It carries out the reaction tRNA(Ala) + L-alanine + ATP = L-alanyl-tRNA(Ala) + AMP + diphosphate. Functionally, catalyzes the attachment of alanine to tRNA(Ala) in a two-step reaction: alanine is first activated by ATP to form Ala-AMP and then transferred to the acceptor end of tRNA(Ala). Also edits incorrectly charged Ser-tRNA(Ala) and Gly-tRNA(Ala) via its editing domain. The chain is Alanine--tRNA ligase from Nitrosococcus oceani (strain ATCC 19707 / BCRC 17464 / JCM 30415 / NCIMB 11848 / C-107).